We begin with the raw amino-acid sequence, 315 residues long: Aspartate carbamoyltransferase catalytic subunit (315 aa).

Carbamoyl phosphate-binding residues include arginine 65 and threonine 66. Lysine 93 is an L-aspartate binding site. Carbamoyl phosphate contacts are provided by arginine 115, histidine 145, and glutamine 148. L-aspartate is bound by residues arginine 179 and arginine 234. Residues glycine 275 and proline 276 each coordinate carbamoyl phosphate.

Belongs to the aspartate/ornithine carbamoyltransferase superfamily. ATCase family. As to quaternary structure, heterododecamer (2C3:3R2) of six catalytic PyrB chains organized as two trimers (C3), and six regulatory PyrI chains organized as three dimers (R2).

The catalysed reaction is carbamoyl phosphate + L-aspartate = N-carbamoyl-L-aspartate + phosphate + H(+). Its pathway is pyrimidine metabolism; UMP biosynthesis via de novo pathway; (S)-dihydroorotate from bicarbonate: step 2/3. Catalyzes the condensation of carbamoyl phosphate and aspartate to form carbamoyl aspartate and inorganic phosphate, the committed step in the de novo pyrimidine nucleotide biosynthesis pathway. This is Aspartate carbamoyltransferase catalytic subunit from Xanthomonas axonopodis pv. citri (strain 306).